Reading from the N-terminus, the 464-residue chain is Cysteine--tRNA ligase (464 aa).

Cys27 contributes to the Zn(2+) binding site. The 'HIGH' region motif lies at 29–39; that stretch reads PTVYNYFHIGN. Zn(2+) contacts are provided by Cys207, His232, and Glu236. A 'KMSKS' region motif is present at residues 264-268; it reads KMSKS. Lys267 contacts ATP.

The protein belongs to the class-I aminoacyl-tRNA synthetase family. In terms of assembly, monomer. The cofactor is Zn(2+).

The protein resides in the cytoplasm. It carries out the reaction tRNA(Cys) + L-cysteine + ATP = L-cysteinyl-tRNA(Cys) + AMP + diphosphate. The polypeptide is Cysteine--tRNA ligase (Alkaliphilus oremlandii (strain OhILAs) (Clostridium oremlandii (strain OhILAs))).